Reading from the N-terminus, the 248-residue chain is 3-deoxy-manno-octulosonate cytidylyltransferase (248 aa).

It belongs to the KdsB family.

Its subcellular location is the cytoplasm. It carries out the reaction 3-deoxy-alpha-D-manno-oct-2-ulosonate + CTP = CMP-3-deoxy-beta-D-manno-octulosonate + diphosphate. Its pathway is nucleotide-sugar biosynthesis; CMP-3-deoxy-D-manno-octulosonate biosynthesis; CMP-3-deoxy-D-manno-octulosonate from 3-deoxy-D-manno-octulosonate and CTP: step 1/1. The protein operates within bacterial outer membrane biogenesis; lipopolysaccharide biosynthesis. Its function is as follows. Activates KDO (a required 8-carbon sugar) for incorporation into bacterial lipopolysaccharide in Gram-negative bacteria. This chain is 3-deoxy-manno-octulosonate cytidylyltransferase, found in Salmonella dublin (strain CT_02021853).